The chain runs to 536 residues: Adenine deaminase (536 aa).

Residues Met-1–Asp-24 are disordered.

Belongs to the metallo-dependent hydrolases superfamily. Adenine deaminase family. It depends on Mn(2+) as a cofactor.

The catalysed reaction is adenine + H2O + H(+) = hypoxanthine + NH4(+). The sequence is that of Adenine deaminase from Deinococcus radiodurans (strain ATCC 13939 / DSM 20539 / JCM 16871 / CCUG 27074 / LMG 4051 / NBRC 15346 / NCIMB 9279 / VKM B-1422 / R1).